The following is a 370-amino-acid chain: Peptidyl-prolyl cis-trans isomerase D (370 aa).

Serine 5 carries the phosphoserine modification. A PPIase cyclophilin-type domain is found at 19–183; sequence FFDVDIGGER…KLCVIAECGE (165 aa). An N6-acetyllysine modification is found at lysine 171. A chaperone activity region spans residues 185 to 215; sequence KEGDDWGIFPKDGSGDSHPDFPEDADIDLKD. A Phosphoserine modification is found at serine 198. An interaction with HSP90AB1 region spans residues 214-370; the sequence is KDVDKILLIS…EKAVYAKMFA (157 aa). TPR repeat units follow at residues 223 to 256, 273 to 306, and 307 to 340; these read SEDLKNIGNTFFKSQNWEMAIKKYAKVLRYVDSS, LSCVLNIGACKLKMSNWQGAIDSCLEALEMDPSN, and TKALYRKAQGWQGLKEYDQALADLKKAQEIAPGD.

The protein belongs to the cyclophilin-type PPIase family. PPIase D subfamily. As to quaternary structure, identified in ESR1 or NR3C1/GCR steroid receptor-chaperone complexes. Found in HSP90 chaperone complexes with kinase clients LCK or EIF2AK1. Two monomers associate with one HSP90 homodimer. Interacts with HSP90AA1. Interacts with HSP90AB1; PPID and FKBP4 compete for binding to HSP90AB1 and the interaction is mutually exclusive with the PPID:HSPA8 interaction. Interacts with HSPA8; PPID and STIP1 but not FKBP4 compete for binding to HSPA8 and the interaction is mutually exclusive with the PPID:HSP90AB1 interaction. Interacts with S100A1 and S100A2; the interactions dissociate the PPID:HSP90AA1 interaction. Interacts with S100A6. Interacts with MYB, ILF2, XRCC6, RACK1 and RPS3. Interacts with cytoplasmic dynein 1 intermediate chain (DYNC1I1 or DYNC1I2).

It localises to the cytoplasm. The protein resides in the nucleus. It is found in the nucleolus. Its subcellular location is the nucleoplasm. The enzyme catalyses [protein]-peptidylproline (omega=180) = [protein]-peptidylproline (omega=0). With respect to regulation, less sensitive to inhibition by cyclosporin A than is CYP-18. PPIase that catalyzes the cis-trans isomerization of proline imidic peptide bonds in oligopeptides and may therefore assist protein folding. Proposed to act as a co-chaperone in HSP90 complexes such as in unligated steroid receptors heterocomplexes. Different co-chaperones seem to compete for association with HSP90 thus establishing distinct HSP90-co-chaperone-receptor complexes with the potential to exert tissue-specific receptor activity control. May have a preference for estrogen receptor complexes and is not found in glucocorticoid receptor complexes. May be involved in cytoplasmic dynein-dependent movement of the receptor from the cytoplasm to the nucleus. May regulate MYB by inhibiting its DNA-binding activity. Involved in regulation of AHR signaling by promoting the formation of the AHR:ARNT dimer; the function is independent of HSP90 but requires the chaperone activity region. Involved in regulation of UV radiation-induced apoptosis. The sequence is that of Peptidyl-prolyl cis-trans isomerase D from Mus musculus (Mouse).